A 356-amino-acid chain; its full sequence is Glutamine synthetase (356 aa).

Residues 26–105 (IMAEYVWVDA…VLAECWNAGG (80 aa)) enclose the GS beta-grasp domain. The region spanning 112-356 (FRHDCVKVMD…TKALLQFSLA (245 aa)) is the GS catalytic domain.

Belongs to the glutamine synthetase family. As to quaternary structure, homooctamer.

It is found in the cytoplasm. The catalysed reaction is L-glutamate + NH4(+) + ATP = L-glutamine + ADP + phosphate + H(+). The protein is Glutamine synthetase (GLN1) of Fusarium solani subsp. phaseoli (Nectria haematococca).